Here is a 74-residue protein sequence, read N- to C-terminus: Putative antitoxin VapB48 (74 aa).

Functionally, possibly the antitoxin component of a type II toxin-antitoxin (TA) system. Its cognate toxin is VapC48 (Potential). This is Putative antitoxin VapB48 (vapB48) from Mycobacterium tuberculosis (strain CDC 1551 / Oshkosh).